Here is a 115-residue protein sequence, read N- to C-terminus: DQKGKSPESECNKISEEPKCNEDKICSWHKEVKAGEKHCKFNSTKAKEKGVAVTQTQTAGGTEATTDKCKGKLEDTCKKESNCKWEGETCKDSSILVNKQLALSVVSAAFAALLF.

A glycan (N-linked (GlcNAc...) asparagine) is linked at N42. The GPI-anchor amidated aspartate moiety is linked to residue D92. The propeptide at 93–115 (SSILVNKQLALSVVSAAFAALLF) is removed in mature form.

It is found in the cell membrane. Its function is as follows. VSG forms a coat on the surface of the parasite. The trypanosome evades the immune response of the host by expressing a series of antigenically distinct VSGs from an estimated 1000 VSG genes. The polypeptide is Variant surface glycoprotein ANTAT 1.8 (Trypanosoma brucei brucei).